A 121-amino-acid polypeptide reads, in one-letter code: Large ribosomal subunit protein eL18 (121 aa).

Belongs to the eukaryotic ribosomal protein eL18 family.

The chain is Large ribosomal subunit protein eL18 from Methanospirillum hungatei JF-1 (strain ATCC 27890 / DSM 864 / NBRC 100397 / JF-1).